The sequence spans 753 residues: Transcription factor SOX-30 (753 aa).

Disordered stretches follow at residues 1-45 (MERA…TLSA) and 140-161 (QELG…TGPR). Residues 7–22 (EPQPQQRPLRPAPPLL) are compositionally biased toward pro residues. Residues 337–405 (VKRPMNAFMV…KHREEFPGWV (69 aa)) constitute a DNA-binding region (HMG box). Disordered stretches follow at residues 514–540 (AGPS…PVSL) and 726–753 (PTST…LRDL). Composition is skewed to polar residues over residues 531–540 (TVKQPTPVSL) and 726–739 (PTST…VNVT).

In terms of assembly, interacts with CTNNB1, competitively inhibiting CTNNB1-TCF7L2/TCF4 interaction.

It is found in the nucleus. The protein localises to the cytoplasm. Acts both as a transcriptional activator and a repressor. Binds to the DNA sequence 5'-ACAAT-3' and shows a preference for guanine residues surrounding this core motif. Binds to its own promoter and activates its own transcription. Required to activate the expression of postmeiotic genes involved in spermiogenesis. Binds to the promoter region of CTNNB1 and represses its transcription which leads to inhibition of Wnt signaling. Also inhibits Wnt signaling by binding to the CTNNB1 protein, preventing interaction of CTNNB1 with TCF7L2/TCF4. This is Transcription factor SOX-30 (SOX30) from Macaca fascicularis (Crab-eating macaque).